We begin with the raw amino-acid sequence, 248 residues long: Pulmonary surfactant-associated protein A (248 aa).

Residues 1–20 (MLLCSLTLTLLWMVASGLEC) form the signal peptide. In terms of domain architecture, Collagen-like spans 28 to 100 (GSPGIPGTPG…PGERGPPGFP (73 aa)). Residues 29–102 (SPGIPGTPGS…ERGPPGFPAY (74 aa)) form a disordered region. A 4-hydroxyproline mark is found at P30, P33, P36, P42, P54, P57, P63, P67, and P70. The segment covering 42 to 51 (PGRDGRDGIK) has biased composition (basic and acidic residues). A compositionally biased stretch (pro residues) spans 54-65 (PGPPGPMGPPGG). Positions 69–82 (LPGRDGMTGAPGLP) are enriched in low complexity. Positions 84-93 (ERGEKGEPGE) are enriched in basic and acidic residues. Positions 132-248 (LAVGEKVFST…LQYRLAICEF (117 aa)) constitute a C-type lectin domain. Cystine bridges form between C155-C246 and C224-C238. N-linked (GlcNAc...) asparagine glycosylation occurs at N207. Residues E215, R217, N234, and D235 each contribute to the Ca(2+) site.

This sequence belongs to the SFTPA family. As to quaternary structure, oligomeric complex of 6 set of homotrimers.

It localises to the secreted. It is found in the extracellular space. The protein resides in the extracellular matrix. Its subcellular location is the surface film. Its function is as follows. In presence of calcium ions, it binds to surfactant phospholipids and contributes to lower the surface tension at the air-liquid interface in the alveoli of the mammalian lung and is essential for normal respiration. Enhances the expression of MYO18A/SP-R210 on alveolar macrophages. The polypeptide is Pulmonary surfactant-associated protein A (SFTPA1) (Bos taurus (Bovine)).